Reading from the N-terminus, the 206-residue chain is MKPLTPRQQQVFDLIKSKIDDTGMPPTRAEIARELGFRSANAAEEHLKALARKQAIEIIPGASRGIRILLEDAANDEQGLPLIGQVAAGEPILAQEHVEAHYQVDPAMFKPQADFLLRVNGESMKDIGIMDGDLLAVHKTQDVRDGQVVVARVDDDVTVKRLERKGSTVLLHAENEEFAPIQVDLTSQHLTIEGLAVGIIRNTDWM.

Residues 28–48 (RAEIARELGFRSANAAEEHLK) constitute a DNA-binding region (H-T-H motif). Catalysis depends on for autocatalytic cleavage activity residues serine 123 and lysine 160.

It belongs to the peptidase S24 family. As to quaternary structure, homodimer.

The enzyme catalyses Hydrolysis of Ala-|-Gly bond in repressor LexA.. In terms of biological role, represses a number of genes involved in the response to DNA damage (SOS response), including recA and lexA. In the presence of single-stranded DNA, RecA interacts with LexA causing an autocatalytic cleavage which disrupts the DNA-binding part of LexA, leading to derepression of the SOS regulon and eventually DNA repair. The sequence is that of LexA repressor from Vibrio parahaemolyticus serotype O3:K6 (strain RIMD 2210633).